The following is a 353-amino-acid chain: Photosystem II protein D1 (353 aa).

Residue threonine 2 is modified to N-acetylthreonine. Threonine 2 carries the phosphothreonine modification. 3 helical membrane passes run 29–46 (YIGWFGVLMIPTLLTATS), 118–133 (HFLLGVACYMGREWEL), and 142–156 (WIAVAYSAPVAAATA). Histidine 118 lines the chlorophyll a pocket. Pheophytin a is bound at residue tyrosine 126. [CaMn4O5] cluster-binding residues include aspartate 170 and glutamate 189. A helical membrane pass occupies residues 197–218 (FHMLGVAGVFGGSLFSAMHGSL). Histidine 198 serves as a coordination point for chlorophyll a. Residues histidine 215 and 264–265 (SF) each bind a quinone. Histidine 215 contacts Fe cation. Histidine 272 contributes to the Fe cation binding site. A helical transmembrane segment spans residues 274–288 (FLTAWPVVGIWFTAL). The [CaMn4O5] cluster site is built by histidine 332, glutamate 333, aspartate 342, and alanine 344. Residues 345–353 (AVEAPSTNG) constitute a propeptide that is removed on maturation.

This sequence belongs to the reaction center PufL/M/PsbA/D family. PSII is composed of 1 copy each of membrane proteins PsbA, PsbB, PsbC, PsbD, PsbE, PsbF, PsbH, PsbI, PsbJ, PsbK, PsbL, PsbM, PsbT, PsbX, PsbY, PsbZ, Psb30/Ycf12, at least 3 peripheral proteins of the oxygen-evolving complex and a large number of cofactors. It forms dimeric complexes. The D1/D2 heterodimer binds P680, chlorophylls that are the primary electron donor of PSII, and subsequent electron acceptors. It shares a non-heme iron and each subunit binds pheophytin, quinone, additional chlorophylls, carotenoids and lipids. D1 provides most of the ligands for the Mn4-Ca-O5 cluster of the oxygen-evolving complex (OEC). There is also a Cl(-1) ion associated with D1 and D2, which is required for oxygen evolution. The PSII complex binds additional chlorophylls, carotenoids and specific lipids. serves as cofactor. Tyr-161 forms a radical intermediate that is referred to as redox-active TyrZ, YZ or Y-Z. In terms of processing, C-terminally processed by CTPA; processing is essential to allow assembly of the oxygen-evolving complex and thus photosynthetic growth.

It is found in the plastid. The protein resides in the chloroplast thylakoid membrane. It carries out the reaction 2 a plastoquinone + 4 hnu + 2 H2O = 2 a plastoquinol + O2. Functionally, photosystem II (PSII) is a light-driven water:plastoquinone oxidoreductase that uses light energy to abstract electrons from H(2)O, generating O(2) and a proton gradient subsequently used for ATP formation. It consists of a core antenna complex that captures photons, and an electron transfer chain that converts photonic excitation into a charge separation. The D1/D2 (PsbA/PsbD) reaction center heterodimer binds P680, the primary electron donor of PSII as well as several subsequent electron acceptors. This chain is Photosystem II protein D1, found in Barbarea verna (Land cress).